The following is a 345-amino-acid chain: MAKVYHDSSADLSIIRGKKVGIVGYGSQGHAHALNLVDSGVQVRVGLRPSSSSKAKAEKSGLQVGSVSDVAQWADVIMILAPDTEQAAIYEKDIAPHLKPGKTLMFAHGFNIRYGTITPPEGIDVSMVAPKAPGHRVREVFTEGGGTPALFAIHQDASGKAREIALSYAAAIGTTRAGVLETTFKEETETDLFGEQAVLCGGAAALVKAGFETLVEAGYQPELAYFECLHELKLIVDLMYRGGLNYMRYSVSDTAEYGDYIAGPRIITDETRKNMKQLLTDIQDGTFAKNWINENKTGRPWFEKKRTDEQEQQLEDVGAQLRDMMTFLNPVKIKQKSEQKEAVAQ.

Residues 2–182 form the KARI N-terminal Rossmann domain; it reads AKVYHDSSAD…GTTRAGVLET (181 aa). Residues 25–28, arginine 48, serine 51, serine 53, and 83–86 contribute to the NADP(+) site; these read YGSQ and DTEQ. Residue histidine 108 is part of the active site. Glycine 134 contacts NADP(+). The 146-residue stretch at 183–328 folds into the KARI C-terminal knotted domain; the sequence is TFKEETETDL…AQLRDMMTFL (146 aa). Residues aspartate 191, glutamate 195, glutamate 227, and glutamate 231 each contribute to the Mg(2+) site. Substrate is bound at residue serine 252.

The protein belongs to the ketol-acid reductoisomerase family. Mg(2+) is required as a cofactor.

It catalyses the reaction (2R)-2,3-dihydroxy-3-methylbutanoate + NADP(+) = (2S)-2-acetolactate + NADPH + H(+). The enzyme catalyses (2R,3R)-2,3-dihydroxy-3-methylpentanoate + NADP(+) = (S)-2-ethyl-2-hydroxy-3-oxobutanoate + NADPH + H(+). The protein operates within amino-acid biosynthesis; L-isoleucine biosynthesis; L-isoleucine from 2-oxobutanoate: step 2/4. It participates in amino-acid biosynthesis; L-valine biosynthesis; L-valine from pyruvate: step 2/4. Its function is as follows. Involved in the biosynthesis of branched-chain amino acids (BCAA). Catalyzes an alkyl-migration followed by a ketol-acid reduction of (S)-2-acetolactate (S2AL) to yield (R)-2,3-dihydroxy-isovalerate. In the isomerase reaction, S2AL is rearranged via a Mg-dependent methyl migration to produce 3-hydroxy-3-methyl-2-ketobutyrate (HMKB). In the reductase reaction, this 2-ketoacid undergoes a metal-dependent reduction by NADPH to yield (R)-2,3-dihydroxy-isovalerate. This Koribacter versatilis (strain Ellin345) protein is Ketol-acid reductoisomerase (NADP(+)).